Here is a 361-residue protein sequence, read N- to C-terminus: Peptide chain release factor 1 (361 aa).

Gln-237 is subject to N5-methylglutamine. Residues 286 to 306 are disordered; that stretch reads AKQDQEQAAKRKSLVGSGDRS.

The protein belongs to the prokaryotic/mitochondrial release factor family. Methylated by PrmC. Methylation increases the termination efficiency of RF1.

It is found in the cytoplasm. Functionally, peptide chain release factor 1 directs the termination of translation in response to the peptide chain termination codons UAG and UAA. The polypeptide is Peptide chain release factor 1 (Coxiella burnetii (strain CbuK_Q154) (Coxiella burnetii (strain Q154))).